An 881-amino-acid polypeptide reads, in one-letter code: MQHTTCTEDRIYHALERCLHGLSRDAVSSRWAAGLCLNCWSLQELVSRDAGNYLILVEKILGKAREVQEKCDYDLVMPLALLFYYAVLYAPHIPPDSELLLKAASIYHSFLTWPVPYCDVFRELLTFISDELKAPGISFQRLVRTEQGLPVKNYQSSTVTVLLLNRSEVQSEFLSIAEKLSSTEPPRHATLVLLLEHLYQVTFGTRCDLGSLHHLLKAKTLEELSEIYTSAAEAQEIAAASSDPVLARERLQSALRDIAGAAALPTIAGDAQPRRLQPIPIPTSRCYTYSWDQDNFDVLNDVLSKECSVVEPVASENEEDEEEEEEDVETDGCSPERDSLLSPISSISKDSVYSALSEDGPKHSCVSLFSSSKDSISELTVVSKKSLRSFVSSLKDCMDSGYAEDSDESSLDTLGRPELKVEKTHHKYRHTLTNKIYKLFKSKSQLVLRRDLKDCVDTGSLPLRRAESLCHPQAKPRIPARSRRAHSLPQHGLGQKLQTPQTPQLLSLPRRPFLSYDEDAKVATMRVVVFGSDRISGKVARAYSNLRLKESTCPTLTRYFKLQFFYVPVKRSCLLPAALLMHPPPSPSDLQLRALAQAEPTLAGAESSTNDISHYIGMLDPWYERNVLGLMNLPMDVLCQSAKPEAEPQEDSREQLPILADMILYYCRFATRPVLLQLYQTELTFIGGEKMTEVFIHSLELGHSAATRAIKASGPGSKRLGIDGDREAIPLTLQIAYSKTAISGRSQWNDVEKVCTSVNLSKACKKYEELASKTECLNLTMTEVVKRQNSKSKKSFNQLSVSQIKVDKVQIIGVQSSFAVCLDQDEQKILQSVTRCEISVCYRPRDSDPLALRRSSLTPQDPSEFHSLLCLPISTFSGALP.

Positions 23–99 (SRDAVSSRWA…APHIPPDSEL (77 aa)) are heterodimerization. 2 disordered regions span residues 312–339 (PVAS…ERDS) and 472–499 (PQAK…KLQT). Residues 316 to 330 (ENEEDEEEEEEDVET) show a composition bias toward acidic residues. Residues 657–757 (PILADMILYY…WNDVEKVCTS (101 aa)) are interaction with G beta gamma proteins.

Heterodimer. Interacts with a catalytic subunit and with G beta gamma proteins.

The protein resides in the nucleus. Its subcellular location is the cytoplasm. The protein localises to the cell membrane. Greatly activated by G gamma proteins. Its function is as follows. Regulatory subunit of the PI3K gamma complex. This is Phosphoinositide 3-kinase regulatory subunit 5 (PIK3R5) from Gallus gallus (Chicken).